We begin with the raw amino-acid sequence, 238 residues long: Ribosomal RNA small subunit methyltransferase G (238 aa).

Residues Gly80, 131–132 (AE), and Arg148 each bind S-adenosyl-L-methionine.

The protein belongs to the methyltransferase superfamily. RNA methyltransferase RsmG family.

It is found in the cytoplasm. Functionally, specifically methylates the N7 position of a guanine in 16S rRNA. The sequence is that of Ribosomal RNA small subunit methyltransferase G from Thermotoga maritima (strain ATCC 43589 / DSM 3109 / JCM 10099 / NBRC 100826 / MSB8).